The following is a 343-amino-acid chain: L-threonine 3-dehydrogenase (343 aa).

A Zn(2+)-binding site is contributed by Cys38. Active-site charge relay system residues include Thr40 and His43. Zn(2+) is bound by residues His63, Glu64, Cys93, Cys96, Cys99, and Cys107. Residues Ile176, Asp196, Arg201, 261-263, and 286-288 contribute to the NAD(+) site; these read LGI and IAG.

Belongs to the zinc-containing alcohol dehydrogenase family. Homotetramer. Zn(2+) serves as cofactor.

It is found in the cytoplasm. The catalysed reaction is L-threonine + NAD(+) = (2S)-2-amino-3-oxobutanoate + NADH + H(+). Its pathway is amino-acid degradation; L-threonine degradation via oxydo-reductase pathway; glycine from L-threonine: step 1/2. In terms of biological role, catalyzes the NAD(+)-dependent oxidation of L-threonine to 2-amino-3-ketobutyrate. The polypeptide is L-threonine 3-dehydrogenase (Thermus thermophilus (strain ATCC 27634 / DSM 579 / HB8)).